The primary structure comprises 352 residues: Histidinol-phosphate aminotransferase (352 aa).

Residue Lys211 is modified to N6-(pyridoxal phosphate)lysine.

This sequence belongs to the class-II pyridoxal-phosphate-dependent aminotransferase family. Histidinol-phosphate aminotransferase subfamily. As to quaternary structure, homodimer. Pyridoxal 5'-phosphate is required as a cofactor.

The catalysed reaction is L-histidinol phosphate + 2-oxoglutarate = 3-(imidazol-4-yl)-2-oxopropyl phosphate + L-glutamate. The protein operates within amino-acid biosynthesis; L-histidine biosynthesis; L-histidine from 5-phospho-alpha-D-ribose 1-diphosphate: step 7/9. The sequence is that of Histidinol-phosphate aminotransferase from Haemophilus influenzae (strain PittEE).